The primary structure comprises 47 residues: Protein YtiD (47 aa).

This is Protein YtiD (ytiD) from Escherichia coli (strain K12).